Consider the following 402-residue polypeptide: C2H2 finger domain transcription factor CON7 (402 aa).

The disordered stretch occupies residues 1–247; that stretch reads MLASSRQPRH…GAQQHKRPRR (247 aa). Polar residues-rich tracts occupy residues 19 to 49 and 72 to 86; these read LSSS…TSVG and CGDN…TVDT. Residues 87-98 are compositionally biased toward low complexity; that stretch reads SSAAQYNASAQQ. Composition is skewed to polar residues over residues 99 to 116 and 125 to 151; these read EVRS…TPTS and ARSS…SSGD. A C2H2-type zinc finger spans residues 256 to 282; the sequence is YKCGWQGCEKAYGTLNHLNAHVTMQSH. The stretch at 289–323 forms a coiled coil; sequence EEFKEIRKEWKARKKEEEAARKADEERQRQAAQSQ. Residues 302-317 show a composition bias toward basic and acidic residues; sequence KKEEEAARKADEERQR. A disordered region spans residues 302-402; sequence KKEEEAARKA…GSNQAMYNQR (101 aa). Composition is skewed to polar residues over residues 322-341, 363-373, and 392-402; these read SQGG…SSNG, AATSTSVQQQP, and GGSNQAMYNQR.

It localises to the nucleus. Its function is as follows. Transcription factor that plays a central role in appressorium formation and pathogenicity. Required for the expression of a large set of genes including factors that might play a role in membrane metabolism and ergosterol biosynthesis, the chitin-binding protein CBP1,as well as CHS7 that is essential for normal pathogenic development. The sequence is that of C2H2 finger domain transcription factor CON7 from Pyricularia oryzae (strain 70-15 / ATCC MYA-4617 / FGSC 8958) (Rice blast fungus).